The following is a 405-amino-acid chain: Dynactin subunit 2 (405 aa).

The disordered stretch occupies residues 1-24; it reads MADPKYANLPGIASNEPDVYETSD. Coiled-coil stretches lie at residues 102–125 and 379–405; these read QQKYQRLVNEIHELCQDVEKIQTS and QQTMKENLLAVEENFSALDQRMKKLNK.

It belongs to the dynactin subunit 2 family. As to quaternary structure, subunit of dynactin, a multiprotein complex part of a tripartite complex with dynein and a adapter, such as BICDL1, BICD2 or HOOK3. The dynactin complex is built around ACTR1A/ACTB filament and consists of an actin-related filament composed of a shoulder domain, a pointed end and a barbed end. Its length is defined by its flexible shoulder domain. The soulder is composed of 2 DCTN1 subunits, 4 DCTN2 and 2 DCTN3.

It localises to the cytoplasm. Its subcellular location is the cytoskeleton. It is found in the microtubule organizing center. The protein resides in the centrosome. The protein localises to the membrane. Part of the dynactin complex that activates the molecular motor dynein for ultra-processive transport along microtubules. In the dynactin soulder domain, binds the ACTR1A filament and acts as a molecular ruler to determine the length. Modulates cytoplasmic dynein binding to an organelle, and plays a role in prometaphase chromosome alignment and spindle organization during mitosis. Involved in anchoring microtubules to centrosomes. The protein is Dynactin subunit 2 (dctn2) of Danio rerio (Zebrafish).